A 185-amino-acid chain; its full sequence is Threonylcarbamoyl-AMP synthase (185 aa).

The YrdC-like domain maps to A5–R185.

This sequence belongs to the SUA5 family. TsaC subfamily.

It is found in the cytoplasm. The catalysed reaction is L-threonine + hydrogencarbonate + ATP = L-threonylcarbamoyladenylate + diphosphate + H2O. Its function is as follows. Required for the formation of a threonylcarbamoyl group on adenosine at position 37 (t(6)A37) in tRNAs that read codons beginning with adenine. Catalyzes the conversion of L-threonine, HCO(3)(-)/CO(2) and ATP to give threonylcarbamoyl-AMP (TC-AMP) as the acyladenylate intermediate, with the release of diphosphate. The sequence is that of Threonylcarbamoyl-AMP synthase from Chromohalobacter salexigens (strain ATCC BAA-138 / DSM 3043 / CIP 106854 / NCIMB 13768 / 1H11).